Here is a 340-residue protein sequence, read N- to C-terminus: S-adenosylmethionine:tRNA ribosyltransferase-isomerase (340 aa).

Belongs to the QueA family. As to quaternary structure, monomer.

Its subcellular location is the cytoplasm. It carries out the reaction 7-aminomethyl-7-carbaguanosine(34) in tRNA + S-adenosyl-L-methionine = epoxyqueuosine(34) in tRNA + adenine + L-methionine + 2 H(+). It functions in the pathway tRNA modification; tRNA-queuosine biosynthesis. Transfers and isomerizes the ribose moiety from AdoMet to the 7-aminomethyl group of 7-deazaguanine (preQ1-tRNA) to give epoxyqueuosine (oQ-tRNA). This chain is S-adenosylmethionine:tRNA ribosyltransferase-isomerase, found in Vesicomyosocius okutanii subsp. Calyptogena okutanii (strain HA).